The sequence spans 109 residues: Ribonuclease P protein component (109 aa).

This sequence belongs to the RnpA family. Consists of a catalytic RNA component (M1 or rnpB) and a protein subunit.

The catalysed reaction is Endonucleolytic cleavage of RNA, removing 5'-extranucleotides from tRNA precursor.. RNaseP catalyzes the removal of the 5'-leader sequence from pre-tRNA to produce the mature 5'-terminus. It can also cleave other RNA substrates such as 4.5S RNA. The protein component plays an auxiliary but essential role in vivo by binding to the 5'-leader sequence and broadening the substrate specificity of the ribozyme. The sequence is that of Ribonuclease P protein component from Streptococcus agalactiae serotype Ia (strain ATCC 27591 / A909 / CDC SS700).